The following is a 41-amino-acid chain: Large ribosomal subunit protein bL36 (41 aa).

It belongs to the bacterial ribosomal protein bL36 family.

The sequence is that of Large ribosomal subunit protein bL36 from Rhizobium etli (strain CIAT 652).